Reading from the N-terminus, the 316-residue chain is tRNA pseudouridine synthase B (316 aa).

Asp-47 functions as the Nucleophile in the catalytic mechanism.

This sequence belongs to the pseudouridine synthase TruB family. Type 1 subfamily.

It carries out the reaction uridine(55) in tRNA = pseudouridine(55) in tRNA. Functionally, responsible for synthesis of pseudouridine from uracil-55 in the psi GC loop of transfer RNAs. The chain is tRNA pseudouridine synthase B from Photobacterium profundum (strain SS9).